The chain runs to 223 residues: Ribose-5-phosphate isomerase A (223 aa).

Residues 28–31 (TGST), 81–84 (DGTD), and 94–97 (KGGG) contribute to the substrate site. Glu-103 functions as the Proton acceptor in the catalytic mechanism. Lys-121 is a binding site for substrate.

It belongs to the ribose 5-phosphate isomerase family. As to quaternary structure, homodimer.

It carries out the reaction aldehydo-D-ribose 5-phosphate = D-ribulose 5-phosphate. It participates in carbohydrate degradation; pentose phosphate pathway; D-ribose 5-phosphate from D-ribulose 5-phosphate (non-oxidative stage): step 1/1. Catalyzes the reversible conversion of ribose-5-phosphate to ribulose 5-phosphate. This chain is Ribose-5-phosphate isomerase A, found in Baumannia cicadellinicola subsp. Homalodisca coagulata.